The following is a 100-amino-acid chain: Urease subunit gamma (100 aa).

It belongs to the urease gamma subunit family. In terms of assembly, heterotrimer of UreA (gamma), UreB (beta) and UreC (alpha) subunits. Three heterotrimers associate to form the active enzyme.

Its subcellular location is the cytoplasm. The enzyme catalyses urea + 2 H2O + H(+) = hydrogencarbonate + 2 NH4(+). Its pathway is nitrogen metabolism; urea degradation; CO(2) and NH(3) from urea (urease route): step 1/1. This is Urease subunit gamma from Edwardsiella ictaluri (strain 93-146).